We begin with the raw amino-acid sequence, 413 residues long: Multifunctional CCA protein (413 aa).

Residues Gly-8 and Arg-11 each coordinate ATP. CTP contacts are provided by Gly-8 and Arg-11. Asp-21 and Asp-23 together coordinate Mg(2+). 3 residues coordinate ATP: Arg-91, Arg-143, and Arg-146. CTP-binding residues include Arg-91, Arg-143, and Arg-146. In terms of domain architecture, HD spans 232–333 (TGVHVMMVID…VRLLERADAL (102 aa)).

The protein belongs to the tRNA nucleotidyltransferase/poly(A) polymerase family. Bacterial CCA-adding enzyme type 1 subfamily. Monomer. Can also form homodimers and oligomers. Mg(2+) serves as cofactor. Requires Ni(2+) as cofactor.

The enzyme catalyses a tRNA precursor + 2 CTP + ATP = a tRNA with a 3' CCA end + 3 diphosphate. It carries out the reaction a tRNA with a 3' CCA end + 2 CTP + ATP = a tRNA with a 3' CCACCA end + 3 diphosphate. Its function is as follows. Catalyzes the addition and repair of the essential 3'-terminal CCA sequence in tRNAs without using a nucleic acid template. Adds these three nucleotides in the order of C, C, and A to the tRNA nucleotide-73, using CTP and ATP as substrates and producing inorganic pyrophosphate. tRNA 3'-terminal CCA addition is required both for tRNA processing and repair. Also involved in tRNA surveillance by mediating tandem CCA addition to generate a CCACCA at the 3' terminus of unstable tRNAs. While stable tRNAs receive only 3'-terminal CCA, unstable tRNAs are marked with CCACCA and rapidly degraded. This Burkholderia mallei (strain NCTC 10247) protein is Multifunctional CCA protein.